Reading from the N-terminus, the 54-residue chain is Phorbol-12-myristate-13-acetate-induced protein 1 (54 aa).

Positions 29–37 (LRRFGDKLN) match the BH3 motif. A required for mitochondrial location region spans residues 41 to 50 (KLLNLISKLF).

The protein belongs to the PMAIP1 family. As to quaternary structure, interacts with MCL1. Interacts with BCL2A1. Interacts with BAX. Interacts with BCL2L10. In terms of tissue distribution, highly expressed in adult T-cell leukemia cell line.

Its subcellular location is the mitochondrion. In terms of biological role, promotes activation of caspases and apoptosis. Promotes mitochondrial membrane changes and efflux of apoptogenic proteins from the mitochondria. Contributes to p53/TP53-dependent apoptosis after radiation exposure. Promotes proteasomal degradation of MCL1. Competes with BAK1 for binding to MCL1 and can displace BAK1 from its binding site on MCL1. Competes with BIM/BCL2L11 for binding to MCL1 and can displace BIM/BCL2L11 from its binding site on MCL1. The protein is Phorbol-12-myristate-13-acetate-induced protein 1 (PMAIP1) of Homo sapiens (Human).